We begin with the raw amino-acid sequence, 524 residues long: Thioredoxin reductase 2, mitochondrial (524 aa).

The N-terminal 36 residues, 1-36 (MAAMAVALRGLGGRFRWRTQAVAGGVRGAARGAAAG), are a transit peptide targeting the mitochondrion. Residue 41–70 (DLLVVGGGSGGLACAKEAAQLGRKVAVVDY) coordinates FAD. An intrachain disulfide couples Cys86 to Cys91. Lys175 and Lys329 each carry N6-succinyllysine. His497 serves as the catalytic Proton acceptor. The cysteinyl-selenocysteine (Cys-Sec) cross-link spans 522 to 523 (CU). Residue Sec523 is a non-standard amino acid, selenocysteine.

This sequence belongs to the class-I pyridine nucleotide-disulfide oxidoreductase family. In terms of assembly, homodimer. Requires FAD as cofactor. As to expression, highly expressed in the prostate, ovary, liver, testis, uterus, colon and small intestine. Intermediate levels in brain, skeletal muscle, heart and spleen. Low levels in placenta, pancreas, thymus and peripheral blood leukocytes. According to PubMed:10608886, high levels in kidney, whereas according to PubMed:9923614, levels are low. High expression is observed in the adrenal cortex.

It localises to the mitochondrion. It catalyses the reaction [thioredoxin]-dithiol + NADP(+) = [thioredoxin]-disulfide + NADPH + H(+). In terms of biological role, involved in the control of reactive oxygen species levels and the regulation of mitochondrial redox homeostasis. Maintains thioredoxin in a reduced state. May play a role in redox-regulated cell signaling. The protein is Thioredoxin reductase 2, mitochondrial of Homo sapiens (Human).